Consider the following 256-residue polypeptide: Alcohol dehydrogenase (256 aa).

Residue 12 to 41 (FVAGLGGIGLDTTKELLKRDLKNLVILDRI) participates in NAD(+) binding. Residue Ser-140 coordinates substrate. The active-site Proton acceptor is Tyr-153.

It belongs to the short-chain dehydrogenases/reductases (SDR) family. Homodimer.

The catalysed reaction is a primary alcohol + NAD(+) = an aldehyde + NADH + H(+). It catalyses the reaction a secondary alcohol + NAD(+) = a ketone + NADH + H(+). This Drosophila ananassae (Fruit fly) protein is Alcohol dehydrogenase.